A 261-amino-acid polypeptide reads, in one-letter code: tRNA U34 carboxymethyltransferase (261 aa).

Carboxy-S-adenosyl-L-methionine contacts are provided by residues Lys-25, Trp-39, Lys-44, Gly-63, 114-115 (VE), Tyr-135, and Arg-250.

This sequence belongs to the class I-like SAM-binding methyltransferase superfamily. CmoB family. As to quaternary structure, homotetramer.

It catalyses the reaction carboxy-S-adenosyl-L-methionine + 5-hydroxyuridine(34) in tRNA = 5-carboxymethoxyuridine(34) in tRNA + S-adenosyl-L-homocysteine + H(+). In terms of biological role, catalyzes carboxymethyl transfer from carboxy-S-adenosyl-L-methionine (Cx-SAM) to 5-hydroxyuridine (ho5U) to form 5-carboxymethoxyuridine (cmo5U) at position 34 in tRNAs. In Helicobacter pylori (strain Shi470), this protein is tRNA U34 carboxymethyltransferase.